Reading from the N-terminus, the 150-residue chain is UPF0506 protein SJCHGC02381 (150 aa).

A signal peptide spans 1–18 (MNTCIQLLILCLVTVINS). N-linked (GlcNAc...) asparagine glycosylation is found at Asn20, Asn24, Asn32, Asn36, Asn48, Asn52, Asn64, and Asn110. The tract at residues 22-49 (TDNSTENTIKNETENATETELPETFENE) is disordered. Positions 36–49 (NATETELPETFENE) are enriched in acidic residues. 3 disulfides stabilise this stretch: Cys116-Cys130, Cys123-Cys134, and Cys129-Cys139.

Belongs to the UPF0506 family.

It is found in the secreted. The polypeptide is UPF0506 protein SJCHGC02381 (Schistosoma japonicum (Blood fluke)).